Consider the following 299-residue polypeptide: Glycine--tRNA ligase alpha subunit (299 aa).

The protein belongs to the class-II aminoacyl-tRNA synthetase family. As to quaternary structure, tetramer of two alpha and two beta subunits.

The protein resides in the cytoplasm. It catalyses the reaction tRNA(Gly) + glycine + ATP = glycyl-tRNA(Gly) + AMP + diphosphate. The sequence is that of Glycine--tRNA ligase alpha subunit from Desulforapulum autotrophicum (strain ATCC 43914 / DSM 3382 / VKM B-1955 / HRM2) (Desulfobacterium autotrophicum).